Here is a 372-residue protein sequence, read N- to C-terminus: Probable dual-specificity RNA methyltransferase RlmN (372 aa).

Glu-106 serves as the catalytic Proton acceptor. A Radical SAM core domain is found at 112 to 359 (YPQRNTVCIS…SCTVRDTRGR (248 aa)). Cys-119 and Cys-365 are oxidised to a cystine. Residues Cys-126, Cys-130, and Cys-133 each contribute to the [4Fe-4S] cluster site. Residues 186 to 187 (GE), Ser-220, 243 to 245 (SLH), and Asn-322 contribute to the S-adenosyl-L-methionine site. Cys-365 (S-methylcysteine intermediate) is an active-site residue.

The protein belongs to the radical SAM superfamily. RlmN family. Requires [4Fe-4S] cluster as cofactor.

The protein localises to the cytoplasm. The catalysed reaction is adenosine(2503) in 23S rRNA + 2 reduced [2Fe-2S]-[ferredoxin] + 2 S-adenosyl-L-methionine = 2-methyladenosine(2503) in 23S rRNA + 5'-deoxyadenosine + L-methionine + 2 oxidized [2Fe-2S]-[ferredoxin] + S-adenosyl-L-homocysteine. It carries out the reaction adenosine(37) in tRNA + 2 reduced [2Fe-2S]-[ferredoxin] + 2 S-adenosyl-L-methionine = 2-methyladenosine(37) in tRNA + 5'-deoxyadenosine + L-methionine + 2 oxidized [2Fe-2S]-[ferredoxin] + S-adenosyl-L-homocysteine. Specifically methylates position 2 of adenine 2503 in 23S rRNA and position 2 of adenine 37 in tRNAs. This Mycolicibacterium smegmatis (strain ATCC 700084 / mc(2)155) (Mycobacterium smegmatis) protein is Probable dual-specificity RNA methyltransferase RlmN.